The chain runs to 258 residues: Phosphoadenosine 5'-phosphosulfate reductase (258 aa).

The active-site Nucleophile; cysteine thiosulfonate intermediate is Cys244.

The protein belongs to the PAPS reductase family. CysH subfamily.

It localises to the cytoplasm. The enzyme catalyses [thioredoxin]-disulfide + sulfite + adenosine 3',5'-bisphosphate + 2 H(+) = [thioredoxin]-dithiol + 3'-phosphoadenylyl sulfate. It participates in sulfur metabolism; hydrogen sulfide biosynthesis; sulfite from sulfate: step 3/3. In terms of biological role, catalyzes the formation of sulfite from phosphoadenosine 5'-phosphosulfate (PAPS) using thioredoxin as an electron donor. The sequence is that of Phosphoadenosine 5'-phosphosulfate reductase from Vibrio vulnificus (strain YJ016).